Here is a 740-residue protein sequence, read N- to C-terminus: Transcription activator of gluconeogenesis NCU03938 (740 aa).

The segment at 1–66 is disordered; it reads MPDDVGPAEA…KYDPKDPLRP (66 aa). Residues 19–37 are compositionally biased toward acidic residues; the sequence is SDNEYDETEVTTKDDDDEK. Residues 52 to 65 show a composition bias toward basic and acidic residues; the sequence is GDQKKKYDPKDPLR. Residues 75 to 103 constitute a DNA-binding region (zn(2)-C6 fungal-type); the sequence is CYACQRAHLTCGDERPCQRCIKRGLAEAC. Disordered regions lie at residues 333-405, 532-579, and 639-674; these read PAGP…RQRD, NSDT…KEQP, and APTA…PTGV. The span at 337 to 351 shows a compositional bias: polar residues; that stretch reads TSLQSPSTENNSPQP. In terms of domain architecture, PAS spans 475–546; that stretch reads ALFEHEEFMH…SISSKGGRGG (72 aa). The segment covering 639–658 has biased composition (low complexity); it reads APTASGGSGSSNGTVVNGGP.

It belongs to the ERT1/acuK family.

The protein localises to the nucleus. Transcription factor which regulates nonfermentable carbon utilization. Activator of gluconeogenetic genes. The protein is Transcription activator of gluconeogenesis NCU03938 of Neurospora crassa (strain ATCC 24698 / 74-OR23-1A / CBS 708.71 / DSM 1257 / FGSC 987).